Consider the following 589-residue polypeptide: Alpha-1,2-mannosyltransferase MNN22 (589 aa).

Over 1-16 (MGSIFKDGRRILVRPK) the chain is Cytoplasmic. A helical transmembrane segment spans residues 17-33 (SLIICLCLISIIFTQLI). Residues 34 to 589 (RYQYQLIADE…NTIAWLGKKT (556 aa)) lie on the Extracellular side of the membrane. The disordered stretch occupies residues 50–77 (EDHSSSQSLKNTKLNSTRSSSPISPPKS). The span at 54–71 (SSQSLKNTKLNSTRSSSP) shows a compositional bias: polar residues. Residues asparagine 64, asparagine 332, and asparagine 530 are each glycosylated (N-linked (GlcNAc...) asparagine).

The protein belongs to the MNN1/MNT family.

The protein localises to the golgi apparatus membrane. It functions in the pathway protein modification; protein glycosylation. In terms of biological role, alpha-1,2-mannosyltransferase required for cell wall integrity. Responsible for addition of the first alpha-1,2-linked mannose to form the branches on the mannan backbone of oligosaccharides. Addition of alpha-1,2-mannose is required for stabilization of the alpha-1,6-mannose backbone and hence regulates mannan fibril length; and is important for both immune recognition and virulence. In Candida albicans (strain SC5314 / ATCC MYA-2876) (Yeast), this protein is Alpha-1,2-mannosyltransferase MNN22 (MNN22).